Consider the following 183-residue polypeptide: Dual-action ribosomal maturation protein DarP (183 aa).

The protein belongs to the DarP family.

It is found in the cytoplasm. Functionally, member of a network of 50S ribosomal subunit biogenesis factors which assembles along the 30S-50S interface, preventing incorrect 23S rRNA structures from forming. Promotes peptidyl transferase center (PTC) maturation. The protein is Dual-action ribosomal maturation protein DarP of Salmonella gallinarum (strain 287/91 / NCTC 13346).